The chain runs to 150 residues: 3-hydroxyacyl-[acyl-carrier-protein] dehydratase FabZ (150 aa).

The active site involves His-51.

Belongs to the thioester dehydratase family. FabZ subfamily.

The protein localises to the cytoplasm. It carries out the reaction a (3R)-hydroxyacyl-[ACP] = a (2E)-enoyl-[ACP] + H2O. Involved in unsaturated fatty acids biosynthesis. Catalyzes the dehydration of short chain beta-hydroxyacyl-ACPs and long chain saturated and unsaturated beta-hydroxyacyl-ACPs. The protein is 3-hydroxyacyl-[acyl-carrier-protein] dehydratase FabZ of Rubrobacter xylanophilus (strain DSM 9941 / JCM 11954 / NBRC 16129 / PRD-1).